The chain runs to 361 residues: Glutaminyl-peptide cyclotransferase (361 aa).

Positions 1-28 (MAGCRDPRVVDTLHLLLLVAVLPLAVSG) are cleaved as a signal peptide. N49 carries N-linked (GlcNAc...) asparagine glycosylation. Residues C139 and C164 are joined by a disulfide bond. D159 contacts Zn(2+). An N-linked (GlcNAc...) asparagine glycan is attached at N183. Residue E201 is the Proton acceptor of the active site. Zn(2+) is bound at residue E202. D248 serves as the catalytic Proton acceptor. Residue H330 coordinates Zn(2+).

It belongs to the glutaminyl-peptide cyclotransferase family. Expressed mainly in brain tissue.

The protein localises to the secreted. It catalyses the reaction N-terminal L-glutaminyl-[peptide] = N-terminal 5-oxo-L-prolyl-[peptide] + NH4(+). Responsible for the biosynthesis of pyroglutamyl peptides. Has a bias against acidic and tryptophan residues adjacent to the N-terminal glutaminyl residue and a lack of importance of chain length after the second residue. Also catalyzes N-terminal pyroglutamate formation. The protein is Glutaminyl-peptide cyclotransferase (QPCT) of Bos taurus (Bovine).